The chain runs to 443 residues: Thymidine phosphorylase (443 aa).

The protein belongs to the thymidine/pyrimidine-nucleoside phosphorylase family. As to quaternary structure, homodimer.

It catalyses the reaction thymidine + phosphate = 2-deoxy-alpha-D-ribose 1-phosphate + thymine. It functions in the pathway pyrimidine metabolism; dTMP biosynthesis via salvage pathway; dTMP from thymine: step 1/2. The enzymes which catalyze the reversible phosphorolysis of pyrimidine nucleosides are involved in the degradation of these compounds and in their utilization as carbon and energy sources, or in the rescue of pyrimidine bases for nucleotide synthesis. The protein is Thymidine phosphorylase of Shewanella frigidimarina (strain NCIMB 400).